We begin with the raw amino-acid sequence, 545 residues long: Probable bifunctional tRNA threonylcarbamoyladenosine biosynthesis protein (545 aa).

Residues 1 to 329 (MDTSKDLICI…YRSDMVEVNW (329 aa)) form a kae1 region. Fe cation-binding residues include histidine 112, histidine 116, and tyrosine 133. L-threonylcarbamoyladenylate contacts are provided by residues 133–137 (YVSGG), aspartate 165, glycine 178, glutamate 182, and asparagine 262. Residue aspartate 290 coordinates Fe cation. One can recognise a Protein kinase domain in the interval 344–545 (IIPEHLIGKG…KEVEKRARYL (202 aa)). ATP contacts are provided by residues 350-358 (IGKGAEADI) and lysine 371. Aspartate 463 serves as the catalytic Proton acceptor; for kinase activity.

The protein in the N-terminal section; belongs to the KAE1 / TsaD family. This sequence in the C-terminal section; belongs to the protein kinase superfamily. Tyr protein kinase family. BUD32 subfamily. Component of the KEOPS complex that consists of Kae1, Bud32, Cgi121 and Pcc1; the whole complex dimerizes. Requires Fe(2+) as cofactor.

Its subcellular location is the cytoplasm. It carries out the reaction L-seryl-[protein] + ATP = O-phospho-L-seryl-[protein] + ADP + H(+). It catalyses the reaction L-threonyl-[protein] + ATP = O-phospho-L-threonyl-[protein] + ADP + H(+). The enzyme catalyses L-threonylcarbamoyladenylate + adenosine(37) in tRNA = N(6)-L-threonylcarbamoyladenosine(37) in tRNA + AMP + H(+). Functionally, required for the formation of a threonylcarbamoyl group on adenosine at position 37 (t(6)A37) in tRNAs that read codons beginning with adenine. Is a component of the KEOPS complex that is probably involved in the transfer of the threonylcarbamoyl moiety of threonylcarbamoyl-AMP (TC-AMP) to the N6 group of A37. The Kae1 domain likely plays a direct catalytic role in this reaction. The Bud32 domain probably displays kinase activity that regulates Kae1 function. The chain is Probable bifunctional tRNA threonylcarbamoyladenosine biosynthesis protein from Methanococcus maripaludis (strain C5 / ATCC BAA-1333).